The following is a 33-amino-acid chain: Beta-theraphotoxin-Cm1a (33 aa).

3 disulfides stabilise this stretch: Cys2-Cys17, Cys9-Cys22, and Cys16-Cys29. At Leu33 the chain carries Leucine amide.

This sequence belongs to the neurotoxin 10 (Hwtx-1) family. 04 (CcoTx1) subfamily. In terms of tissue distribution, expressed by the venom gland.

It localises to the secreted. Inhibits many voltage-gated sodium channels and one voltage-gated calcium channel (Cav2.2/CACNA1B (IC(50)=400 nM), Nav1.2/SCN2A (IC(50)=3-70 nM), Nav1.1/SCN1A (IC(50)=523-1060 nM), Nav1.7/SCN9A (IC(50)=129.1-5120 nM), Nav1.4/SCN4A (IC(50)=263-888 nM or &gt;10 uM) and Nav1.5/SCN5A (IC(50)=188-323 nM or &gt;10 uM)). It acts by shifting the voltage dependence of channel activation to more depolarized potentials and by blocking the inward component of the sodium current. It shows moderate affinity for lipid bilayers. On Nav1.7/SCN9A, it has been shown to interact with the S3-S4 loop of domain DII (site 4). Is significantly more potent against Nav1.2/SCN2A than the other Nav channel subtypes. In vivo, this toxin causes general ataxia, lack of response to stimuli, and semiparalysis. After a few minutes, the mice are unable to stand, and breathing is reduced in rhythm and intensity. Symptoms gradually increase with progressive slowing of breathing and flaccid paralysis, death occurred within 10 to 20 minutes post injection. Animals remain totally flaccid, and no symptoms of excitatory neurotoxicity are observed. This Ceratogyrus marshalli (Straighthorned baboon tarantula) protein is Beta-theraphotoxin-Cm1a.